The sequence spans 106 residues: ELIEAVRLIKFLYQSNPPPKPEGTRQARRNRRRRWRERQRQIHSISERILSTYLGRSAEPVPLQLPPLERLTLDCNEDCGTSGTQGVGSPQILVESPTVLESGTKE.

A homomultimerization region spans residues 8–16 (LIKFLYQSN). A disordered region spans residues 14 to 39 (QSNPPPKPEGTRQARRNRRRRWRERQ). The Nuclear localization signal and RNA-binding (RRE) motif lies at 24–40 (TRQARRNRRRRWRERQR). Residues 26–37 (QARRNRRRRWRE) show a composition bias toward basic residues. Residues 63–74 (LQLPPLERLTLD) carry the Nuclear export signal and binding to XPO1 motif. A phosphoserine; by host mark is found at Ser82 and Ser89. Residues 82–106 (SGTQGVGSPQILVESPTVLESGTKE) form a disordered region.

The protein belongs to the HIV-1 REV protein family. In terms of assembly, homomultimer; when bound to the RRE. Multimeric assembly is essential for activity and may involve XPO1. Binds to human KPNB1, XPO1, TNPO1, RANBP5 and IPO7. Interacts with the viral Integrase. Interacts with human KHDRBS1. Interacts with human NAP1; this interaction decreases Rev multimerization and stimulates its activity. Interacts with human DEAD-box helicases DDX3 and DDX24; these interactions may serve for viral RNA export to the cytoplasm and packaging, respectively. Interacts with human PSIP1; this interaction may inhibit HIV-1 DNA integration by promoting dissociation of the Integrase-LEDGF/p75 complex. In terms of processing, asymmetrically arginine dimethylated at one site by host PRMT6. Methylation impairs the RNA-binding activity and export of viral RNA from the nucleus to the cytoplasm. Phosphorylated by protein kinase CK2. Presence of, and maybe binding to the N-terminus of the regulatory beta subunit of CK2 is necessary for CK2-mediated Rev's phosphorylation.

It localises to the host nucleus. It is found in the host nucleolus. Its subcellular location is the host cytoplasm. Functionally, escorts unspliced or incompletely spliced viral pre-mRNAs (late transcripts) out of the nucleus of infected cells. These pre-mRNAs carry a recognition sequence called Rev responsive element (RRE) located in the env gene, that is not present in fully spliced viral mRNAs (early transcripts). This function is essential since most viral proteins are translated from unspliced or partially spliced pre-mRNAs which cannot exit the nucleus by the pathway used by fully processed cellular mRNAs. Rev itself is translated from a fully spliced mRNA that readily exits the nucleus. Rev's nuclear localization signal (NLS) binds directly to KPNB1/Importin beta-1 without previous binding to KPNA1/Importin alpha-1. KPNB1 binds to the GDP bound form of RAN (Ran-GDP) and targets Rev to the nucleus. In the nucleus, the conversion from Ran-GDP to Ran-GTP dissociates Rev from KPNB1 and allows Rev's binding to the RRE in viral pre-mRNAs. Rev multimerization on the RRE via cooperative assembly exposes its nuclear export signal (NES) to the surface. Rev can then form a complex with XPO1/CRM1 and Ran-GTP, leading to nuclear export of the complex. Conversion from Ran-GTP to Ran-GDP mediates dissociation of the Rev/RRE/XPO1/RAN complex, so that Rev can return to the nucleus for a subsequent round of export. Beside KPNB1, also seems to interact with TNPO1/Transportin-1, RANBP5/IPO5 and IPO7/RANBP7 for nuclear import. The nucleoporin-like HRB/RIP is an essential cofactor that probably indirectly interacts with Rev to release HIV RNAs from the perinuclear region to the cytoplasm. The sequence is that of Protein Rev from Homo sapiens (Human).